A 345-amino-acid polypeptide reads, in one-letter code: uncharacterized protein (345 aa).

The tract at residues 1–98 (MNDEMKGKSG…ISGKSFIDPE (98 aa)) is disordered. 3 stretches are compositionally biased toward basic and acidic residues: residues 18 to 27 (RSDDDSDKRT), 42 to 68 (SRAD…EDSP), and 76 to 86 (PGDETPEKADH).

It belongs to the class IV-like SAM-binding methyltransferase superfamily. RNA methyltransferase TrmH family.

This is an uncharacterized protein from Escherichia coli O157:H7.